We begin with the raw amino-acid sequence, 332 residues long: Glycerol-3-phosphate dehydrogenase [NAD(P)+] (332 aa).

NADPH is bound by residues Ser10, Trp11, His31, Arg32, and Lys105. Sn-glycerol 3-phosphate is bound by residues Lys105, Gly136, and Ser138. Residue Ala140 participates in NADPH binding. Residues Lys191, Asp244, Ser254, Arg255, and Asn256 each coordinate sn-glycerol 3-phosphate. Lys191 functions as the Proton acceptor in the catalytic mechanism. Arg255 contributes to the NADPH binding site. The NADPH site is built by Val279 and Glu281.

It belongs to the NAD-dependent glycerol-3-phosphate dehydrogenase family.

It is found in the cytoplasm. The catalysed reaction is sn-glycerol 3-phosphate + NAD(+) = dihydroxyacetone phosphate + NADH + H(+). The enzyme catalyses sn-glycerol 3-phosphate + NADP(+) = dihydroxyacetone phosphate + NADPH + H(+). The protein operates within membrane lipid metabolism; glycerophospholipid metabolism. Functionally, catalyzes the reduction of the glycolytic intermediate dihydroxyacetone phosphate (DHAP) to sn-glycerol 3-phosphate (G3P), the key precursor for phospholipid synthesis. This Prosthecochloris aestuarii (strain DSM 271 / SK 413) protein is Glycerol-3-phosphate dehydrogenase [NAD(P)+].